Here is a 100-residue protein sequence, read N- to C-terminus: UPF0213 protein YhbQ (100 aa).

A GIY-YIG domain is found at 2–77 (TPWYLYLIRT…KQLTKRQKER (76 aa)).

The protein belongs to the UPF0213 family.

The polypeptide is UPF0213 protein YhbQ (Salmonella choleraesuis (strain SC-B67)).